A 196-amino-acid polypeptide reads, in one-letter code: MKLFDYPGIQNTDETLKIAVERAKKGDIKSIVVASSTGYTAKKLLDLLEKEGLDLNVVVVTYHQGFHGEDTISMDKEVEEELKKRGAKVFRGSHALSGVERGISNKLGGYGPVQVIAETLRTFGQGVKVCYEITIMACDAGLIKAKEEVIAIGGTGRGADTAMVIKPANMNTFFNIEAREILCMPRIKKKVKEDDE.

This is an uncharacterized protein from Methanocaldococcus jannaschii (strain ATCC 43067 / DSM 2661 / JAL-1 / JCM 10045 / NBRC 100440) (Methanococcus jannaschii).